A 395-amino-acid chain; its full sequence is S-adenosylmethionine synthase (395 aa).

Residue His-16 participates in ATP binding. Residue Asp-18 coordinates Mg(2+). Residue Glu-44 participates in K(+) binding. L-methionine is bound by residues Glu-57 and Gln-100. The flexible loop stretch occupies residues 100–110 (QSTDIAQGVNE). Residues 174 to 176 (DAK), 241 to 242 (RF), Asp-250, 256 to 257 (RK), Ala-273, and Lys-277 contribute to the ATP site. An L-methionine-binding site is contributed by Asp-250. Position 281 (Lys-281) interacts with L-methionine.

Belongs to the AdoMet synthase family. Homotetramer; dimer of dimers. Mg(2+) serves as cofactor. The cofactor is K(+).

It is found in the cytoplasm. It catalyses the reaction L-methionine + ATP + H2O = S-adenosyl-L-methionine + phosphate + diphosphate. Its pathway is amino-acid biosynthesis; S-adenosyl-L-methionine biosynthesis; S-adenosyl-L-methionine from L-methionine: step 1/1. Its function is as follows. Catalyzes the formation of S-adenosylmethionine (AdoMet) from methionine and ATP. The overall synthetic reaction is composed of two sequential steps, AdoMet formation and the subsequent tripolyphosphate hydrolysis which occurs prior to release of AdoMet from the enzyme. This chain is S-adenosylmethionine synthase, found in Streptococcus uberis (strain ATCC BAA-854 / 0140J).